Reading from the N-terminus, the 361-residue chain is Histidinol-phosphate aminotransferase (361 aa).

The residue at position 219 (Lys-219) is an N6-(pyridoxal phosphate)lysine.

The protein belongs to the class-II pyridoxal-phosphate-dependent aminotransferase family. Histidinol-phosphate aminotransferase subfamily. In terms of assembly, homodimer. The cofactor is pyridoxal 5'-phosphate.

It catalyses the reaction L-histidinol phosphate + 2-oxoglutarate = 3-(imidazol-4-yl)-2-oxopropyl phosphate + L-glutamate. The protein operates within amino-acid biosynthesis; L-histidine biosynthesis; L-histidine from 5-phospho-alpha-D-ribose 1-diphosphate: step 7/9. The polypeptide is Histidinol-phosphate aminotransferase (Acinetobacter baumannii (strain ACICU)).